Here is an 89-residue protein sequence, read N- to C-terminus: Small ribosomal subunit protein uS17 (89 aa).

Belongs to the universal ribosomal protein uS17 family. Part of the 30S ribosomal subunit.

Its function is as follows. One of the primary rRNA binding proteins, it binds specifically to the 5'-end of 16S ribosomal RNA. This Coxiella burnetii (strain RSA 493 / Nine Mile phase I) protein is Small ribosomal subunit protein uS17.